Consider the following 377-residue polypeptide: MRAAIFAAIGALLLSPASCQSGMEYDADNLAKPTLSIKTFRGAPQNSFEEFPLSAIEGWTGTTKTVKIKCPEELDSNLHVNNATMGYLSSPLSTKLIPAIYILVFAVGMPANAVTLWMLFRTRTIRMTIFYTNLAIADFLFCVTLPFRIAYHLNGNNWVFGEVMCRATTVIFYGNMYCSILLLACISINRYLAIVHPFTYRGLPKRTYALLTCGLVWTTVFLYMLPFFILKQEYYLVQQDITTCHDVHNTCESSSPFQLYYFISLAFFGFLIPFLVIIYCYTAIIWTLNAKDRRWLWYIKASLLTFVIFTICFAPSNIILIIHHANYYYSNTDALYFVYLIALCLGSLNSCLDPFLYFLMSKITDHSTAYLTMVKLS.

Positions 1-19 (MRAAIFAAIGALLLSPASC) are cleaved as a signal peptide. A propeptide spans 20–38 (QSGMEYDADNLAKPTLSIK) (removed for receptor activation). The Extracellular segment spans residues 39 to 94 (TFRGAPQNSFEEFPLSAIEGWTGTTKTVKIKCPEELDSNLHVNNATMGYLSSPLST). A glycan (N-linked (GlcNAc...) asparagine) is linked at Asn-82. Residues 95-120 (KLIPAIYILVFAVGMPANAVTLWMLF) traverse the membrane as a helical segment. Topologically, residues 121–127 (RTRTIRM) are cytoplasmic. The chain crosses the membrane as a helical span at residues 128–147 (TIFYTNLAIADFLFCVTLPF). Over 148-166 (RIAYHLNGNNWVFGEVMCR) the chain is Extracellular. A disulfide bond links Cys-165 and Cys-244. Residues 167-188 (ATTVIFYGNMYCSILLLACISI) form a helical membrane-spanning segment. At 189–205 (NRYLAIVHPFTYRGLPK) the chain is on the cytoplasmic side. Residues 206 to 229 (RTYALLTCGLVWTTVFLYMLPFFI) form a helical membrane-spanning segment. Over 230–259 (LKQEYYLVQQDITTCHDVHNTCESSSPFQL) the chain is Extracellular. A helical transmembrane segment spans residues 260–279 (YYFISLAFFGFLIPFLVIIY). Over 280 to 296 (CYTAIIWTLNAKDRRWL) the chain is Cytoplasmic. Residues 297 to 321 (WYIKASLLTFVIFTICFAPSNIILI) form a helical membrane-spanning segment. Over 322-335 (IHHANYYYSNTDAL) the chain is Extracellular. A helical transmembrane segment spans residues 336–360 (YFVYLIALCLGSLNSCLDPFLYFLM). At 361 to 377 (SKITDHSTAYLTMVKLS) the chain is on the cytoplasmic side.

It belongs to the G-protein coupled receptor 1 family. Interacts with INSC/inscuteable and GPSM2. In terms of processing, a proteolytic cleavage generates a new N-terminus that functions as a tethered ligand.

It is found in the cell membrane. Its function is as follows. Receptor for activated thrombin coupled to G proteins that stimulate phosphoinositide hydrolysis. The polypeptide is Proteinase-activated receptor 3 (F2RL2) (Bos taurus (Bovine)).